A 217-amino-acid chain; its full sequence is Large ribosomal subunit protein uL3 (217 aa).

The disordered stretch occupies residues 137–160; sequence VSASHGSHRNHRKPGSIGASSTPS.

This sequence belongs to the universal ribosomal protein uL3 family. As to quaternary structure, part of the 50S ribosomal subunit. Forms a cluster with proteins L14 and L19.

One of the primary rRNA binding proteins, it binds directly near the 3'-end of the 23S rRNA, where it nucleates assembly of the 50S subunit. In Clavibacter sepedonicus (Clavibacter michiganensis subsp. sepedonicus), this protein is Large ribosomal subunit protein uL3.